A 303-amino-acid chain; its full sequence is MTEQASISNHDVAGWRDYLELTKPNVVALMLLTSLIGMLLAVPGMVPIDILILGNLGIALCAGSAAAVNHLVDRKVDLKMARTFNRPIAKGRIDPTKAILFAAILGLAGMAILMVWVNHLTAWLTLASLVGYAFIYTFWLKRATPQNIVIGGLAGAAPPLLGWVAVTGEVHGHALLLVLIIFAWTPPHFWALAVHRKEEYANAKIPMLPVTHGEAYTKIQILLYTFILIAVTLLPYATHMLNELYLLGAVVLGIGFLYYAVAMMRNKNKNAGMDAFKYSIVYLMALFVVMLLDHYLLPTNIVS.

The next 9 membrane-spanning stretches (helical) occupy residues 26-46 (VVAL…PGMV), 48-68 (IDIL…AAAV), 98-118 (AILF…VWVN), 120-140 (LTAW…TFWL), 148-168 (IVIG…AVTG), 174-194 (ALLL…ALAV), 221-241 (ILLY…THML), 244-264 (LYLL…VAMM), and 278-298 (YSIV…YLLP).

The protein belongs to the UbiA prenyltransferase family. Protoheme IX farnesyltransferase subfamily.

It is found in the cell inner membrane. The catalysed reaction is heme b + (2E,6E)-farnesyl diphosphate + H2O = Fe(II)-heme o + diphosphate. It participates in porphyrin-containing compound metabolism; heme O biosynthesis; heme O from protoheme: step 1/1. Its function is as follows. Converts heme B (protoheme IX) to heme O by substitution of the vinyl group on carbon 2 of heme B porphyrin ring with a hydroxyethyl farnesyl side group. This is Protoheme IX farnesyltransferase from Saccharophagus degradans (strain 2-40 / ATCC 43961 / DSM 17024).